We begin with the raw amino-acid sequence, 523 residues long: Xanthotoxin 5-hydroxylase CYP82C2 (523 aa).

The helical transmembrane segment at 1-21 (MDTSLFSLFVPILVFVFIALF) threads the bilayer. Residue C462 coordinates heme.

The protein belongs to the cytochrome P450 family. Heme is required as a cofactor.

It is found in the membrane. It carries out the reaction xanthotoxin + reduced [NADPH--hemoprotein reductase] + O2 = 5-hydroxyxanthotoxin + oxidized [NADPH--hemoprotein reductase] + H2O + 2 H(+). It catalyses the reaction indole-3-carbonyl nitrile + reduced [NADPH--hemoprotein reductase] + O2 = 4-hydroxy-indole-3-carbonyl nitrile + oxidized [NADPH--hemoprotein reductase] + H2O + H(+). Its function is as follows. Involved in the biosynthetic pathway to 4-hydroxyindole-3-carbonyl nitrile (4-OH-ICN), a cyanogenic metabolite required for inducible pathogen defense. Converts indole-3-carbonyl nitrile (ICN) into 4-OH-ICN. Can hydroxylate xanthotoxin (8-methoxypsoralen) to form 5-hydroxyxanthotoxin (5-hydroxy-8-methoxypsoralen) in vivo and in vitro. In Arabidopsis thaliana (Mouse-ear cress), this protein is Xanthotoxin 5-hydroxylase CYP82C2.